Reading from the N-terminus, the 289-residue chain is Ribosomal RNA small subunit methyltransferase I (289 aa).

This sequence belongs to the methyltransferase superfamily. RsmI family.

Its subcellular location is the cytoplasm. It carries out the reaction cytidine(1402) in 16S rRNA + S-adenosyl-L-methionine = 2'-O-methylcytidine(1402) in 16S rRNA + S-adenosyl-L-homocysteine + H(+). Catalyzes the 2'-O-methylation of the ribose of cytidine 1402 (C1402) in 16S rRNA. In Helicobacter pylori (strain J99 / ATCC 700824) (Campylobacter pylori J99), this protein is Ribosomal RNA small subunit methyltransferase I.